The sequence spans 359 residues: Tyrosine-protein phosphatase non-receptor type 7 (359 aa).

The disordered stretch occupies residues 1-33 (MVQACEGRSRAQLPTLSLGADMTQPPPTKAPAK). An interaction with MAP kinases region spans residues 38-51 (LQERRGSSVALMLD). The residue at position 44 (Ser-44) is a Phosphoserine. A Phosphothreonine modification is found at Thr-66. Phosphoserine occurs at positions 93 and 143. Residues 97-349 (LEEEFLKIPS…QFLHHTLALY (253 aa)) form the Tyrosine-protein phosphatase domain. Substrate-binding positions include Asp-257, 290-296 (CSAGIGR), and Gln-334. Cys-290 acts as the Phosphocysteine intermediate in catalysis. Cys-290 bears the Cysteine sulfenic acid (-SOH) mark.

It belongs to the protein-tyrosine phosphatase family. Non-receptor class subfamily. Post-translationally, oxidized at active site cysteine. Treatment with pervanadate (vanadate and H(2)O(2)) or with antigen enhanced oxidation of active site cysteine. In terms of tissue distribution, expressed in bone marrow-derived mast cells.

The protein localises to the cytoplasm. It is found in the cytoskeleton. The enzyme catalyses O-phospho-L-tyrosyl-[protein] + H2O = L-tyrosyl-[protein] + phosphate. Inhibited upon FCER1A triggering. May play a role in the regulation of T and B-lymphocyte development and signal transduction. The protein is Tyrosine-protein phosphatase non-receptor type 7 (Ptpn7) of Mus musculus (Mouse).